Reading from the N-terminus, the 242-residue chain is Small ribosomal subunit protein uS3 (242 aa).

The KH type-2 domain occupies 39–110; the sequence is IRRFIHKKYG…QVRINVVEVE (72 aa). A disordered region spans residues 216–242; it reads QSMPVGASPRRRGNRRPQQFEDRSNEG. The span at 233 to 242 shows a compositional bias: basic and acidic residues; sequence QQFEDRSNEG.

This sequence belongs to the universal ribosomal protein uS3 family. Part of the 30S ribosomal subunit. Forms a tight complex with proteins S10 and S14.

Its function is as follows. Binds the lower part of the 30S subunit head. Binds mRNA in the 70S ribosome, positioning it for translation. The sequence is that of Small ribosomal subunit protein uS3 from Prochlorococcus marinus (strain MIT 9303).